A 176-amino-acid polypeptide reads, in one-letter code: Protein GrpE (176 aa).

Belongs to the GrpE family. Homodimer.

It localises to the cytoplasm. Functionally, participates actively in the response to hyperosmotic and heat shock by preventing the aggregation of stress-denatured proteins, in association with DnaK and GrpE. It is the nucleotide exchange factor for DnaK and may function as a thermosensor. Unfolded proteins bind initially to DnaJ; upon interaction with the DnaJ-bound protein, DnaK hydrolyzes its bound ATP, resulting in the formation of a stable complex. GrpE releases ADP from DnaK; ATP binding to DnaK triggers the release of the substrate protein, thus completing the reaction cycle. Several rounds of ATP-dependent interactions between DnaJ, DnaK and GrpE are required for fully efficient folding. The polypeptide is Protein GrpE (Rickettsia bellii (strain OSU 85-389)).